Consider the following 196-residue polypeptide: GTP cyclohydrolase-2 (196 aa).

Residue 49–53 coordinates GTP; sequence RIHSE. Zn(2+) is bound by residues C54, C65, and C67. Residues Q70, 92 to 94, and T114 contribute to the GTP site; that span reads EGR. The active-site Proton acceptor is the D126. R128 functions as the Nucleophile in the catalytic mechanism. Residues T149 and K154 each coordinate GTP.

It belongs to the GTP cyclohydrolase II family. In terms of assembly, homodimer. It depends on Zn(2+) as a cofactor.

The enzyme catalyses GTP + 4 H2O = 2,5-diamino-6-hydroxy-4-(5-phosphoribosylamino)-pyrimidine + formate + 2 phosphate + 3 H(+). The protein operates within cofactor biosynthesis; riboflavin biosynthesis; 5-amino-6-(D-ribitylamino)uracil from GTP: step 1/4. Its function is as follows. Catalyzes the conversion of GTP to 2,5-diamino-6-ribosylamino-4(3H)-pyrimidinone 5'-phosphate (DARP), formate and pyrophosphate. The chain is GTP cyclohydrolase-2 from Hamiltonella defensa subsp. Acyrthosiphon pisum (strain 5AT).